Consider the following 101-residue polypeptide: UPF0213 protein VC0395_0675/VC395_A0575 (101 aa).

The GIY-YIG domain occupies 9–85 (SPWFVYLVRC…KALSKSQKEA (77 aa)).

Belongs to the UPF0213 family.

This chain is UPF0213 protein VC0395_0675/VC395_A0575, found in Vibrio cholerae serotype O1 (strain ATCC 39541 / Classical Ogawa 395 / O395).